A 537-amino-acid chain; its full sequence is Beta-hexosaminidase subunit beta (537 aa).

Positions 1 to 23 (MPGSPRRAPGLLLQALVAMVSLA) are cleaved as a signal peptide. Asn62 carries N-linked (GlcNAc...) asparagine glycosylation. A disulfide bond links Cys69 and Cys115. Asn168 and Asn305 each carry an N-linked (GlcNAc...) asparagine glycan. 2 cysteine pairs are disulfide-bonded: Cys287–Cys338 and Cys512–Cys529. The active-site Proton donor is Glu333.

It belongs to the glycosyl hydrolase 20 family. In terms of assembly, there are 3 forms of beta-hexosaminidase: hexosaminidase A is a heterodimer composed of one subunit alpha and one subunit beta (chain A and B); hexosaminidase B is a homodimer of two beta subunits (two chains A and B); hexosaminidase S is a homodimer of two alpha subunits. The composition of the dimer (isozyme A versus isozyme S) has a significant effect on the substrate specificity of the alpha subunit active site.

Its subcellular location is the lysosome. It localises to the cytoplasmic vesicle. The protein resides in the secretory vesicle. It is found in the cortical granule. It carries out the reaction Hydrolysis of terminal non-reducing N-acetyl-D-hexosamine residues in N-acetyl-beta-D-hexosaminides.. It catalyses the reaction N-acetyl-beta-D-galactosaminyl-(1-&gt;4)-beta-D-3-sulfogalactosyl-(1-&gt;4)-beta-D-glucosyl-(1&lt;-&gt;1')-ceramide + H2O = a beta-D-3-sulfogalactosyl-(1-&gt;4)-beta-D-glucosyl-(1&lt;-&gt;1')-ceramide + N-acetyl-beta-D-galactosamine. The catalysed reaction is a ganglioside GM2 (d18:1(4E)) + H2O = a ganglioside GM3 (d18:1(4E)) + N-acetyl-beta-D-galactosamine. The enzyme catalyses a ganglioside GM2 + H2O = a ganglioside GM3 + N-acetyl-beta-D-galactosamine. It carries out the reaction beta-D-GalNAc-(1-&gt;4)-alpha-L-IdoA-(1-&gt;3)-beta-D-GalNAc-4-sulfate-(1-&gt;4)-alpha-L-IdoA-(1-&gt;3)-D-GalNAc-4-sulfate + H2O = alpha-L-IdoA-(1-&gt;3)-beta-D-GalNAc-4-sulfate-(1-&gt;4)-alpha-L-IdoA-(1-&gt;3)-D-GalNAc-4-sulfate + N-acetyl-D-galactosamine. It catalyses the reaction N-acetyl-beta-D-6-sulfogalactosaminyl-(1-&gt;4)-alpha-L-iduronyl-(1-&gt;3)-N-acetyl-D-6-sulfogalactosamine + H2O = alpha-L-iduronyl-(1-&gt;3)-N-acetyl-D-6-sulfogalactosamine + N-acetyl-D-6-sulfogalactosamine. Its activity is regulated as follows. Addition of GM2A stimulates the hydrolysis of sulfated glycosphingolipid SM2 and the ganglioside GM2. In terms of biological role, hydrolyzes the non-reducing end N-acetyl-D-hexosamine and/or sulfated N-acetyl-D-hexosamine of glycoconjugates, such as the oligosaccharide moieties from proteins and neutral glycolipids, or from certain mucopolysaccharides. The isozyme B does not hydrolyze each of these substrates, however hydrolyzes efficiently neutral oligosaccharide. Only the isozyme A is responsible for the degradation of GM2 gangliosides in the presence of GM2A. During fertilization is responsible, at least in part, for the zona block to polyspermy. Present in the cortical granules of non-activated oocytes, is exocytosed during the cortical reaction in response to oocyte activation and inactivates the sperm galactosyltransferase-binding site, accounting for the block in sperm binding to the zona pellucida. The chain is Beta-hexosaminidase subunit beta from Rattus norvegicus (Rat).